The following is a 125-amino-acid chain: Small ribosomal subunit protein uS13 (125 aa).

Belongs to the universal ribosomal protein uS13 family. Part of the 30S ribosomal subunit. Forms a loose heterodimer with protein S19. Forms two bridges to the 50S subunit in the 70S ribosome.

Functionally, located at the top of the head of the 30S subunit, it contacts several helices of the 16S rRNA. In the 70S ribosome it contacts the 23S rRNA (bridge B1a) and protein L5 of the 50S subunit (bridge B1b), connecting the 2 subunits; these bridges are implicated in subunit movement. Contacts the tRNAs in the A and P-sites. In Orientia tsutsugamushi (strain Ikeda) (Rickettsia tsutsugamushi), this protein is Small ribosomal subunit protein uS13.